The chain runs to 436 residues: 3-ketoacyl-CoA thiolase (436 aa).

C99 serves as the catalytic Acyl-thioester intermediate. Catalysis depends on proton acceptor residues H392 and C422.

Belongs to the thiolase-like superfamily. Thiolase family. In terms of assembly, heterotetramer of two alpha chains (FadJ) and two beta chains (FadI).

The protein localises to the cytoplasm. The enzyme catalyses an acyl-CoA + acetyl-CoA = a 3-oxoacyl-CoA + CoA. The protein operates within lipid metabolism; fatty acid beta-oxidation. Catalyzes the final step of fatty acid oxidation in which acetyl-CoA is released and the CoA ester of a fatty acid two carbons shorter is formed. This Salmonella paratyphi A (strain ATCC 9150 / SARB42) protein is 3-ketoacyl-CoA thiolase.